We begin with the raw amino-acid sequence, 207 residues long: Small ribosomal subunit protein uS4 (207 aa).

Positions 33 to 54 (KLDSKPGQHGRTSGARTSDYGN) are disordered. Residues 42–53 (GRTSGARTSDYG) show a composition bias toward polar residues. In terms of domain architecture, S4 RNA-binding spans 97 to 160 (SRLDNVVYRM…KKQVRIAEAL (64 aa)).

It belongs to the universal ribosomal protein uS4 family. As to quaternary structure, part of the 30S ribosomal subunit. Contacts protein S5. The interaction surface between S4 and S5 is involved in control of translational fidelity.

Its function is as follows. One of the primary rRNA binding proteins, it binds directly to 16S rRNA where it nucleates assembly of the body of the 30S subunit. In terms of biological role, with S5 and S12 plays an important role in translational accuracy. The chain is Small ribosomal subunit protein uS4 from Cupriavidus necator (strain ATCC 17699 / DSM 428 / KCTC 22496 / NCIMB 10442 / H16 / Stanier 337) (Ralstonia eutropha).